The chain runs to 237 residues: Orotidine 5'-phosphate decarboxylase (237 aa).

Substrate contacts are provided by residues Asp-10, Lys-33, 60–69 (DLKLHDIPNT), Thr-124, Arg-186, Gln-195, Gly-215, and Arg-216. Catalysis depends on Lys-62, which acts as the Proton donor.

It belongs to the OMP decarboxylase family. Type 1 subfamily. As to quaternary structure, homodimer.

It carries out the reaction orotidine 5'-phosphate + H(+) = UMP + CO2. The protein operates within pyrimidine metabolism; UMP biosynthesis via de novo pathway; UMP from orotate: step 2/2. In terms of biological role, catalyzes the decarboxylation of orotidine 5'-monophosphate (OMP) to uridine 5'-monophosphate (UMP). The protein is Orotidine 5'-phosphate decarboxylase of Lactiplantibacillus plantarum (strain ATCC BAA-793 / NCIMB 8826 / WCFS1) (Lactobacillus plantarum).